The sequence spans 67 residues: Beta-defensin 123 (67 aa).

A signal peptide spans 1–20 (MKLLLLTLTVLLLLSQLTPG). Intrachain disulfides connect Cys25–Cys52, Cys32–Cys46, and Cys36–Cys53.

It belongs to the beta-defensin family.

It is found in the secreted. Its function is as follows. Has antibacterial activity. In Gorilla gorilla gorilla (Western lowland gorilla), this protein is Beta-defensin 123 (DEFB123).